A 154-amino-acid chain; its full sequence is Ribonuclease HI (154 aa).

The 142-residue stretch at 1 to 142 (MQKQIEIFTD…CDQLAKAGAE (142 aa)) folds into the RNase H type-1 domain. Positions 10, 48, 70, and 134 each coordinate Mg(2+).

Belongs to the RNase H family. Monomer. Mg(2+) serves as cofactor.

The protein resides in the cytoplasm. It carries out the reaction Endonucleolytic cleavage to 5'-phosphomonoester.. In terms of biological role, endonuclease that specifically degrades the RNA of RNA-DNA hybrids. This Pasteurella multocida (strain Pm70) protein is Ribonuclease HI (rnhA).